Consider the following 637-residue polypeptide: Biosynthetic arginine decarboxylase (637 aa).

Position 101 is an N6-(pyridoxal phosphate)lysine (Lys-101). 286-296 (FDVGGGLAVDY) is a binding site for substrate.

It belongs to the Orn/Lys/Arg decarboxylase class-II family. SpeA subfamily. It depends on Mg(2+) as a cofactor. Pyridoxal 5'-phosphate is required as a cofactor.

It catalyses the reaction L-arginine + H(+) = agmatine + CO2. The protein operates within amine and polyamine biosynthesis; agmatine biosynthesis; agmatine from L-arginine: step 1/1. Its function is as follows. Catalyzes the biosynthesis of agmatine from arginine. The protein is Biosynthetic arginine decarboxylase of Shewanella baltica (strain OS195).